A 373-amino-acid polypeptide reads, in one-letter code: STE20-related kinase adapter protein alpha (373 aa).

The 311-residue stretch at 11–321 folds into the Protein kinase domain; sequence YELLTVIGKG…ASTLLNHSFF (311 aa). Residues 255-281 are compositionally biased toward polar residues; that stretch reads STSRSAANSGLSESLAPSTPRTSNGDS. The tract at residues 255 to 288 is disordered; the sequence is STSRSAANSGLSESLAPSTPRTSNGDSPSHPYHR. Phosphothreonine; by LKB1 is present on Thr-361.

Belongs to the protein kinase superfamily. STE Ser/Thr protein kinase family. STE20 subfamily. In terms of assembly, component of a trimeric complex composed of STK11/LKB1, STRAD (STRADA or STRADB) and CAB39/MO25 (CAB39/MO25alpha or CAB39L/MO25beta): the complex tethers STK11/LKB1 in the cytoplasm and stimulates its catalytic activity.

It is found in the nucleus. The protein localises to the cytoplasm. Pseudokinase which, in complex with CAB39/MO25 (CAB39/MO25alpha or CAB39L/MO25beta), binds to and activates STK11/LKB1. Adopts a closed conformation typical of active protein kinases and binds STK11/LKB1 as a pseudosubstrate, promoting conformational change of STK11/LKB1 in an active conformation. This chain is STE20-related kinase adapter protein alpha (STRADA), found in Bos taurus (Bovine).